The sequence spans 377 residues: Carboxynorspermidine/carboxyspermidine decarboxylase (377 aa).

An N6-(pyridoxal phosphate)lysine modification is found at K41. Residues E238 and D274 each coordinate substrate.

The protein belongs to the Orn/Lys/Arg decarboxylase class-II family. NspC subfamily. Homodimer. The cofactor is pyridoxal 5'-phosphate.

It localises to the cytoplasm. The catalysed reaction is carboxynorspermidine + H(+) = norspermidine + CO2. It carries out the reaction carboxyspermidine + H(+) = spermidine + CO2. Its function is as follows. Catalyzes the decarboxylation of carboxynorspermidine and carboxyspermidine. Carboxynorspermidine is decarboxylated 20-fold more efficiently than carboxyspermidine. Exhibits some activity with L-ornithine, but shows no activity with L-arginine, L-lysine or meso-diaminopimelate. This is Carboxynorspermidine/carboxyspermidine decarboxylase from Vibrio vulnificus (strain CMCP6).